Reading from the N-terminus, the 105-residue chain is uncharacterized protein (105 aa).

This is an uncharacterized protein from Archaeoglobus fulgidus (strain ATCC 49558 / DSM 4304 / JCM 9628 / NBRC 100126 / VC-16).